The sequence spans 254 residues: Type III pantothenate kinase (254 aa).

6–13 (DVGNTNIV) contacts ATP. 107-110 (GADR) provides a ligand contact to substrate. Asp-109 functions as the Proton acceptor in the catalytic mechanism. Residue Asp-129 coordinates K(+). Thr-132 contributes to the ATP binding site. Thr-184 contributes to the substrate binding site.

Belongs to the type III pantothenate kinase family. In terms of assembly, homodimer. It depends on NH4(+) as a cofactor. K(+) is required as a cofactor.

The protein resides in the cytoplasm. The catalysed reaction is (R)-pantothenate + ATP = (R)-4'-phosphopantothenate + ADP + H(+). The protein operates within cofactor biosynthesis; coenzyme A biosynthesis; CoA from (R)-pantothenate: step 1/5. Functionally, catalyzes the phosphorylation of pantothenate (Pan), the first step in CoA biosynthesis. The chain is Type III pantothenate kinase from Exiguobacterium sp. (strain ATCC BAA-1283 / AT1b).